The sequence spans 120 residues: Dihydroneopterin triphosphate 2'-epimerase (120 aa).

It belongs to the DHNA family. Homooctamer.

The enzyme catalyses 7,8-dihydroneopterin 3'-triphosphate = 7,8-dihydromonapterin 3'-triphosphate. Functionally, catalyzes the epimerization of carbon 2' of the side chain of 7,8-dihydroneopterin triphosphate (H2NTP) to form 7,8-dihydromonapterin triphosphate (H2MTP). Is required for tetrahydromonapterin biosynthesis. In Escherichia coli O157:H7, this protein is Dihydroneopterin triphosphate 2'-epimerase (folX).